The sequence spans 111 residues: Small ribosomal subunit protein bS16 (111 aa).

This sequence belongs to the bacterial ribosomal protein bS16 family.

This Rickettsia felis (strain ATCC VR-1525 / URRWXCal2) (Rickettsia azadi) protein is Small ribosomal subunit protein bS16.